Reading from the N-terminus, the 395-residue chain is S-adenosylmethionine synthase (395 aa).

H15 is an ATP binding site. D17 is a Mg(2+) binding site. E43 is a K(+) binding site. Q99 provides a ligand contact to L-methionine. The tract at residues 99 to 109 is flexible loop; that stretch reads QSPDIAMGVNE. ATP-binding positions include 174-176, 240-241, D249, 255-256, A272, and K276; these read DGK, RF, and RK. D249 contributes to the L-methionine binding site. K280 serves as a coordination point for L-methionine.

Belongs to the AdoMet synthase family. As to quaternary structure, homotetramer; dimer of dimers. It depends on Mg(2+) as a cofactor. The cofactor is K(+).

The protein resides in the cytoplasm. The catalysed reaction is L-methionine + ATP + H2O = S-adenosyl-L-methionine + phosphate + diphosphate. It participates in amino-acid biosynthesis; S-adenosyl-L-methionine biosynthesis; S-adenosyl-L-methionine from L-methionine: step 1/1. Its function is as follows. Catalyzes the formation of S-adenosylmethionine (AdoMet) from methionine and ATP. The overall synthetic reaction is composed of two sequential steps, AdoMet formation and the subsequent tripolyphosphate hydrolysis which occurs prior to release of AdoMet from the enzyme. This is S-adenosylmethionine synthase from Moorella thermoacetica (strain ATCC 39073 / JCM 9320).